Reading from the N-terminus, the 584-residue chain is Potassium-transporting ATPase potassium-binding subunit (584 aa).

10 helical membrane passes run 8–28, 65–85, 139–159, 172–192, 262–282, 292–312, 398–418, 440–460, 507–527, and 544–564; these read FLVLIGVILALLLIPTGEFMF, SFAVAMMIFSVIGIVFVFILQ, VQNFMSAAVGMVVLVAFIYGF, VLLLRSIWILLPLSFVIALVL, FTDLVEIVAILLIPVSLCFMF, GIAILIAMMILFVPLLGLGIW, GLYCMLVFVIIAMFIAGLMVG, ILIPIFLILIGTAIAVSITAG, MFVGRYAIAIITLALAGAFVA, and LFIIWVVFTILIIGALSFLPA.

This sequence belongs to the KdpA family. The system is composed of three essential subunits: KdpA, KdpB and KdpC.

Its subcellular location is the cell membrane. Functionally, part of the high-affinity ATP-driven potassium transport (or Kdp) system, which catalyzes the hydrolysis of ATP coupled with the electrogenic transport of potassium into the cytoplasm. This subunit binds the extracellular potassium ions and delivers the ions to the membrane domain of KdpB through an intramembrane tunnel. The polypeptide is Potassium-transporting ATPase potassium-binding subunit (Methanoregula boonei (strain DSM 21154 / JCM 14090 / 6A8)).